The chain runs to 405 residues: Enoyl-[acyl-carrier-protein] reductase [NADH] (405 aa).

NAD(+)-binding positions include 51 to 56 (GASSGY), 77 to 78 (FE), 114 to 115 (DA), and 142 to 143 (LA). Tyrosine 228 contacts substrate. Tyrosine 238 acts as the Proton donor in catalysis. NAD(+) is bound by residues lysine 247 and 276–278 (VVT).

Belongs to the TER reductase family. As to quaternary structure, monomer.

The catalysed reaction is a 2,3-saturated acyl-[ACP] + NAD(+) = a (2E)-enoyl-[ACP] + NADH + H(+). The protein operates within lipid metabolism; fatty acid biosynthesis. In terms of biological role, involved in the final reduction of the elongation cycle of fatty acid synthesis (FAS II). Catalyzes the reduction of a carbon-carbon double bond in an enoyl moiety that is covalently linked to an acyl carrier protein (ACP). The protein is Enoyl-[acyl-carrier-protein] reductase [NADH] of Chromohalobacter salexigens (strain ATCC BAA-138 / DSM 3043 / CIP 106854 / NCIMB 13768 / 1H11).